Here is a 573-residue protein sequence, read N- to C-terminus: Chaperone Ric-8 (573 aa).

Over residues 308–324 (ESHKEREQDNEKEKDTE) the composition is skewed to basic and acidic residues. Disordered stretches follow at residues 308 to 329 (ESHKEREQDNEKEKDTEAGAGA) and 473 to 493 (GTDYSSDSEDSDTEEYKQQQQ). Residues Ser477, Ser478, Ser480, and Ser483 each carry the phosphoserine modification.

Belongs to the synembryn family. As to quaternary structure, interacts with GDP-bound G(i)-alpha protein G-i-alpha-65A. Does not interact with G-alpha proteins when they are in complex with subunits beta and gamma. Interacts with Frq2 in a Ca(2+)-independent manner but does not interact with Frq1. As to expression, expression in the embryo is primarily neural.

It localises to the cytoplasm. Its subcellular location is the cell cortex. The protein localises to the presynapse. Its function is as follows. Chaperone that specifically binds and folds some, but not all, nascent G alpha proteins prior to G protein heterotrimer formation, promoting their stability and activity. Also acts as a guanine nucleotide exchange factor (GEF) for G alpha proteins by stimulating exchange of bound GDP for free GTP. Plays a key role in asymmetric spindle positioning, a step for asymmetric cell division that generates cell diversity during development by activating G(i) alpha protein independently of G-protein coupled receptors. Required during gastrulation and sensory organ precursor (SOP) formation. Plays a role in positively regulating synapse number and neurotransmitter release. The chain is Chaperone Ric-8 (ric8a) from Drosophila melanogaster (Fruit fly).